Reading from the N-terminus, the 207-residue chain is Outer-membrane lipoprotein LolB (207 aa).

The signal sequence occupies residues 1 to 21; the sequence is MPLPDFRLIRLLPLAALVLTA. Cys-22 is lipidated: N-palmitoyl cysteine. Cys-22 carries S-diacylglycerol cysteine lipidation.

This sequence belongs to the LolB family. Monomer.

The protein localises to the cell outer membrane. Its function is as follows. Plays a critical role in the incorporation of lipoproteins in the outer membrane after they are released by the LolA protein. This chain is Outer-membrane lipoprotein LolB, found in Escherichia coli (strain K12 / MC4100 / BW2952).